A 398-amino-acid polypeptide reads, in one-letter code: Riboflavin biosynthesis protein RibBA (398 aa).

The segment at 1 to 199 is DHBP synthase; that stretch reads MFHPIEEALE…IKDLIEYRYN (199 aa). D-ribulose 5-phosphate is bound by residues 26 to 27, aspartate 31, 138 to 142, and glutamate 162; these read RE and RAGHT. Glutamate 27 is a Mg(2+) binding site. Histidine 141 is a binding site for Mg(2+). Positions 200–398 are GTP cyclohydrolase II; that stretch reads ITTLVNREVD…MKKLGHLLHF (199 aa). 251–255 is a binding site for GTP; the sequence is RVHSE. Residues cysteine 256, cysteine 267, and cysteine 269 each contribute to the Zn(2+) site. GTP contacts are provided by residues glutamine 272, 294–296, and threonine 316; that span reads EGR. Aspartate 328 acts as the Proton acceptor; for GTP cyclohydrolase activity in catalysis. The Nucleophile; for GTP cyclohydrolase activity role is filled by arginine 330. Positions 351 and 356 each coordinate GTP.

In the N-terminal section; belongs to the DHBP synthase family. The protein in the C-terminal section; belongs to the GTP cyclohydrolase II family. The cofactor is Mg(2+). It depends on Mn(2+) as a cofactor. Zn(2+) serves as cofactor.

It carries out the reaction D-ribulose 5-phosphate = (2S)-2-hydroxy-3-oxobutyl phosphate + formate + H(+). It catalyses the reaction GTP + 4 H2O = 2,5-diamino-6-hydroxy-4-(5-phosphoribosylamino)-pyrimidine + formate + 2 phosphate + 3 H(+). It participates in cofactor biosynthesis; riboflavin biosynthesis; 2-hydroxy-3-oxobutyl phosphate from D-ribulose 5-phosphate: step 1/1. The protein operates within cofactor biosynthesis; riboflavin biosynthesis; 5-amino-6-(D-ribitylamino)uracil from GTP: step 1/4. Its function is as follows. Catalyzes the conversion of D-ribulose 5-phosphate to formate and 3,4-dihydroxy-2-butanone 4-phosphate. Functionally, catalyzes the conversion of GTP to 2,5-diamino-6-ribosylamino-4(3H)-pyrimidinone 5'-phosphate (DARP), formate and pyrophosphate. The protein is Riboflavin biosynthesis protein RibBA of Bacillus velezensis (strain DSM 23117 / BGSC 10A6 / LMG 26770 / FZB42) (Bacillus amyloliquefaciens subsp. plantarum).